The primary structure comprises 516 residues: Putative glucosylceramidase 2 (516 aa).

An N-terminal signal peptide occupies residues 1-23; it reads MSIAWSCFVLGLFALASLQVALA. Residue E254 is the Proton donor of the active site. E358 (nucleophile) is an active-site residue.

This sequence belongs to the glycosyl hydrolase 30 family.

The catalysed reaction is a beta-D-glucosylceramide + H2O = an N-acyl-sphingoid base + D-glucose. It carries out the reaction a beta-D-glucosyl-(1&lt;-&gt;1')-N-acylsphing-4-enine + H2O = an N-acylsphing-4-enine + D-glucose. The enzyme catalyses an N-acyl-1-beta-D-glucosyl-15-methylhexadecasphing-4-enine + H2O = an N-acyl-15-methylhexadecasphing-4-enine + D-glucose. Its pathway is lipid metabolism; sphingolipid metabolism. Functionally, glucosylceramidase that catalyzes the hydrolysis of glucosylceramides into free ceramides and glucose. C.elegans contain specific sphingoid bases, which are unique or different in structure compared to the sphingoid bases found in other animals. Two examples of these distinctive compounds are: 15-methylhexadecasphinganine and 15-methylhexadecasphing-4-enine. The chain is Putative glucosylceramidase 2 (gba-2) from Caenorhabditis elegans.